We begin with the raw amino-acid sequence, 549 residues long: MKNINPTQTSAWQALQKHYDEMKDVTIAELFANDSDRFAKFSATFDDLMLVDFSKNRITEETLAKLQDLAKETDLAGAIKSMFSGEKINRTEDRAVLHVALRNRSNTPIIVDGKDVMPEVNAVLEKMKTFSQAIISGQWKGYTGKAITDVVNIGIGGSDLGPFMVTEALRPYKNHLNMHFVSNVDGTHIAEVLKKVNPETTLFLVASKTFTTQETMTNAHSARDWFLKTAGDEKHVAKHFAALSTNVKAVGEFGIDTANMFEFWDWVGGRYSLWSAIGLSIILSVGFDNFVELLSGAHAMDKHFSTTPTEKNLPILLALIGIWYNNFFGAETEAILPYDQYMHRFAAYLQQGNMESNGKYVDRNGNAVDYQTGPIIWGEPGTNGQHAFYQLIHQGTKMVPCDFIAPAITHNPLSDHHQKLLSNFFAQTEALAFGKSREVVEQEYRDQGKDPAQLEHVVPFKVFEGNRPTNSILLREITPFSLGALIALYEHKIFTQGVILNIFTFDQWGVELGKQLANRILPELGDDKAISSHDSSTNGLINRYKAWRA.

Glu-355 functions as the Proton donor in the catalytic mechanism. Residues His-386 and Lys-514 contribute to the active site.

Belongs to the GPI family.

It localises to the cytoplasm. The catalysed reaction is alpha-D-glucose 6-phosphate = beta-D-fructose 6-phosphate. The protein operates within carbohydrate biosynthesis; gluconeogenesis. It participates in carbohydrate degradation; glycolysis; D-glyceraldehyde 3-phosphate and glycerone phosphate from D-glucose: step 2/4. In terms of biological role, catalyzes the reversible isomerization of glucose-6-phosphate to fructose-6-phosphate. In Salmonella choleraesuis (strain SC-B67), this protein is Glucose-6-phosphate isomerase.